A 122-amino-acid chain; its full sequence is Large ribosomal subunit protein uL14 (122 aa).

This sequence belongs to the universal ribosomal protein uL14 family. In terms of assembly, part of the 50S ribosomal subunit. Forms a cluster with proteins L3 and L19. In the 70S ribosome, L14 and L19 interact and together make contacts with the 16S rRNA in bridges B5 and B8.

Functionally, binds to 23S rRNA. Forms part of two intersubunit bridges in the 70S ribosome. The polypeptide is Large ribosomal subunit protein uL14 (Roseiflexus castenholzii (strain DSM 13941 / HLO8)).